The chain runs to 196 residues: Mediator of RNA polymerase II transcription subunit 21 (196 aa).

Residues 52 to 111 (KIPKNASTPPVPASAPQAAQSQSQASPPPPDTANPQTGGQHADQQQQSPDGEGLPAPDSP) are disordered. Low complexity-rich tracts occupy residues 65-76 (SAPQAAQSQSQA) and 87-98 (QTGGQHADQQQQ). Positions 144–174 (SSEAEQERRIRELEGELRIVEGVREERRREL) form a coiled coil.

Belongs to the Mediator complex subunit 21 family. Component of the Mediator complex.

The protein localises to the nucleus. Its function is as follows. Component of the Mediator complex, a coactivator involved in the regulated transcription of nearly all RNA polymerase II-dependent genes. Mediator functions as a bridge to convey information from gene-specific regulatory proteins to the basal RNA polymerase II transcription machinery. Mediator is recruited to promoters by direct interactions with regulatory proteins and serves as a scaffold for the assembly of a functional preinitiation complex with RNA polymerase II and the general transcription factors. This Aspergillus niger (strain ATCC MYA-4892 / CBS 513.88 / FGSC A1513) protein is Mediator of RNA polymerase II transcription subunit 21 (srb7).